A 105-amino-acid chain; its full sequence is DNA-directed RNA polymerase subunit Rpo13 (105 aa).

2 stretches are compositionally biased toward basic and acidic residues: residues 1-10 and 70-80; these read MSEDDSKKEP and FDDVARSYSKA. Disordered stretches follow at residues 1 to 35 and 70 to 105; these read MSED…GGEF and FDDV…EEEE. Positions 81 to 97 are enriched in basic residues; that stretch reads DKKKRRVEKKPKKGKVT.

It belongs to the archaeal Rpo13 RNA polymerase subunit family. Part of the 13-subunit RNA polymerase.

It localises to the cytoplasm. The catalysed reaction is RNA(n) + a ribonucleoside 5'-triphosphate = RNA(n+1) + diphosphate. DNA-dependent RNA polymerase catalyzes the transcription of DNA into RNA using the four ribonucleoside triphosphates as substrates. In vitro binds dsDNA but not ssDNA. This is DNA-directed RNA polymerase subunit Rpo13 from Sulfolobus acidocaldarius (strain ATCC 33909 / DSM 639 / JCM 8929 / NBRC 15157 / NCIMB 11770).